A 179-amino-acid polypeptide reads, in one-letter code: Replication restart protein DnaT (179 aa).

Positions M1–A83 are required for trimerization and to bind PriB. Residues V84 to G179 are binds ssDNA. Residues S151–G179 are disordered. A compositionally biased stretch (basic and acidic residues) spans P159–I173.

It belongs to the DnaT family. As to quaternary structure, homotrimer. Interacts with PriB. Interacts with PriC. Component of the replication restart primosome. Primosome assembly occurs via a 'hand-off' mechanism. PriA binds to replication forks, subsequently PriB then DnaT bind; DnaT then displaces ssDNA to generate the helicase loading substrate.

Functionally, involved in the restart of stalled replication forks, which reloads the replicative helicase on sites other than the origin of replication. Can function in multiple replication restart pathways. Displaces ssDNA from a PriB-ssDNA complex. Probably forms a spiral filament on ssDNA. Binds single-stranded (ss)DNA. The minimal binding site is about 26 +/- 2 nucleotides (nt) per trimer. Two DNA-protein complexes are seen with 55 nt-long ssDNA. The protein is Replication restart protein DnaT of Klebsiella pneumoniae subsp. pneumoniae (strain ATCC 700721 / MGH 78578).